A 100-amino-acid chain; its full sequence is Probable steroid-binding protein 3 (100 aa).

Methionine 1 is subject to N-acetylmethionine. In terms of domain architecture, Cytochrome b5 heme-binding spans 1–82 (MEFTAEQLSQ…LTEKEINTLN (82 aa)). The segment at 1-82 (MEFTAEQLSQ…LTEKEINTLN (82 aa)) is sterol-binding.

This sequence belongs to the cytochrome b5 family. MAPR subfamily.

Its subcellular location is the nucleus. The polypeptide is Probable steroid-binding protein 3 (MP3) (Arabidopsis thaliana (Mouse-ear cress)).